Here is a 533-residue protein sequence, read N- to C-terminus: Beta-glucosidase 22 (533 aa).

A signal peptide spans 1-24 (MAVSSSTSTCSSFSLLLLLLLLAA). An N-linked (GlcNAc...) asparagine glycan is attached at Asn41. Residues Gln61, His161, and 206-207 (DE) each bind a beta-D-glucoside. Glu207 acts as the Proton donor in catalysis. Residues Cys226 and Cys234 are joined by a disulfide bond. Asn233 and Asn238 each carry an N-linked (GlcNAc...) asparagine glycan. 2 residues coordinate a beta-D-glucoside: Tyr350 and Glu421. The active-site Nucleophile is the Glu421. A glycan (N-linked (GlcNAc...) asparagine) is linked at Asn435. Residues Trp466 and Phe482 each contribute to the a beta-D-glucoside site.

This sequence belongs to the glycosyl hydrolase 1 family.

The catalysed reaction is Hydrolysis of terminal, non-reducing beta-D-glucosyl residues with release of beta-D-glucose.. The sequence is that of Beta-glucosidase 22 (BGLU22) from Oryza sativa subsp. japonica (Rice).